A 432-amino-acid chain; its full sequence is Adenosylhomocysteinase (432 aa).

3 residues coordinate substrate: T56, D131, and E156. 157-159 (TTT) lines the NAD(+) pocket. 2 residues coordinate substrate: K186 and D190. Residues 222 to 227 (GDVGKG), E243, N248, 299 to 301 (IGH), N346, H353, K426, 426 to 430 (KPDHY), and Y430 each bind NAD(+).

It belongs to the adenosylhomocysteinase family. In terms of assembly, interacts with AhcyL1; the interaction may negatively regulate Ahcy catalytic activity. NAD(+) serves as cofactor.

It catalyses the reaction S-adenosyl-L-homocysteine + H2O = L-homocysteine + adenosine. It functions in the pathway amino-acid biosynthesis; L-homocysteine biosynthesis; L-homocysteine from S-adenosyl-L-homocysteine: step 1/1. Its function is as follows. Adenosylhomocysteine is a competitive inhibitor of S-adenosyl-L-methionine-dependent methyl transferase reactions; therefore adenosylhomocysteinase may play a key role in the control of methylations via regulation of the intracellular concentration of adenosylhomocysteine. In Drosophila melanogaster (Fruit fly), this protein is Adenosylhomocysteinase.